The following is a 486-amino-acid chain: ATP-dependent 6-phosphofructokinase (486 aa).

ATP contacts are provided by residues Gly-105, 171–172 (RG), and 196–199 (GDGT). Asp-197 serves as a coordination point for Mg(2+). Residues 225–227 (TID), 270–272 (MGR), Glu-323, and 378–381 (YMIR) each bind substrate. The active-site Proton acceptor is the Asp-227. The Peroxisomal targeting signal motif lies at 484-486 (SKV).

Belongs to the phosphofructokinase type A (PFKA) family. PPi-dependent PFK group II subfamily. Atypical ATP-dependent clade 'X' sub-subfamily. In terms of assembly, homotetramer. The cofactor is Mg(2+).

The protein resides in the glycosome. It catalyses the reaction beta-D-fructose 6-phosphate + ATP = beta-D-fructose 1,6-bisphosphate + ADP + H(+). Its pathway is carbohydrate degradation; glycolysis; D-glyceraldehyde 3-phosphate and glycerone phosphate from D-glucose: step 3/4. With respect to regulation, allosterically activated by AMP. Its function is as follows. Catalyzes the phosphorylation of D-fructose 6-phosphate to fructose 1,6-bisphosphate by ATP, the first committing step of glycolysis. The chain is ATP-dependent 6-phosphofructokinase from Leishmania donovani.